The following is a 186-amino-acid chain: ADP-ribosylation factor-like protein 8B-A (186 aa).

The note=Mediates targeting to membranes intramembrane region spans 1–19; it reads MLALINRLLDWFKSLFWKE. Residues 29-35, 71-75, and 130-133 contribute to the GTP site; these read QYSGKTT, DIGGQ, and NKRD.

The protein belongs to the small GTPase superfamily. Arf family.

The protein localises to the late endosome membrane. The protein resides in the lysosome membrane. Its subcellular location is the cytoplasm. It is found in the cytoskeleton. It localises to the spindle. The protein localises to the early endosome membrane. Its function is as follows. Small GTPase which cycles between active GTP-bound and inactive GDP-bound states. In its active state, binds to a variety of effector proteins playing a key role in the regulation of lysosomal positioning which is important for nutrient sensing, natural killer cell-mediated cytotoxicity and antigen presentation. Along with its effectors, orchestrates lysosomal transport and fusion. The protein is ADP-ribosylation factor-like protein 8B-A (arl8ba) of Danio rerio (Zebrafish).